The following is a 95-amino-acid chain: L-amino-acid oxidase (95 aa).

It belongs to the flavin monoamine oxidase family. FIG1 subfamily. As to quaternary structure, homodimer; non-covalently linked. Requires FAD as cofactor. In terms of processing, N-glycosylated. Expressed by the venom gland.

It localises to the secreted. It carries out the reaction an L-alpha-amino acid + O2 + H2O = a 2-oxocarboxylate + H2O2 + NH4(+). It catalyses the reaction L-leucine + O2 + H2O = 4-methyl-2-oxopentanoate + H2O2 + NH4(+). The enzyme catalyses L-phenylalanine + O2 + H2O = 3-phenylpyruvate + H2O2 + NH4(+). The catalysed reaction is L-tryptophan + O2 + H2O = indole-3-pyruvate + H2O2 + NH4(+). It carries out the reaction L-methionine + O2 + H2O = 4-methylsulfanyl-2-oxobutanoate + H2O2 + NH4(+). It catalyses the reaction L-arginine + O2 + H2O = 5-guanidino-2-oxopentanoate + H2O2 + NH4(+). Functionally, catalyzes an oxidative deamination of predominantly hydrophobic and aromatic L-amino acids, thus producing hydrogen peroxide that may contribute to the diverse toxic effects of this enzyme. Is highly active on L-Met, L-Leu, L-Phe, L-Trp, and L-Arg, and no weakly or no active on L-His, L-Tyr, L-Ile, L-Gln, and L-Lys. Exhibits diverse biological activities, such as antibacterial activity against both Gram-positive (B.subtilis) and Gram-negative (E.coli) bacteria, and inhibition of ADP- or collagen-induced platelet aggregation. Effects of snake L-amino oxidases on platelets are controversial, since they either induce aggregation or inhibit agonist-induced aggregation. These different effects are probably due to different experimental conditions. This protein may also induce hemorrhage, hemolysis, edema, apoptosis, and have antiparasitic activities. The protein is L-amino-acid oxidase of Naja oxiana (Central Asian cobra).